The chain runs to 280 residues: Ribosomal RNA small subunit methyltransferase A (280 aa).

The S-adenosyl-L-methionine site is built by His-15, Leu-17, Gly-42, Glu-64, Asp-89, and Asn-109.

It belongs to the class I-like SAM-binding methyltransferase superfamily. rRNA adenine N(6)-methyltransferase family. RsmA subfamily.

It is found in the cytoplasm. It carries out the reaction adenosine(1518)/adenosine(1519) in 16S rRNA + 4 S-adenosyl-L-methionine = N(6)-dimethyladenosine(1518)/N(6)-dimethyladenosine(1519) in 16S rRNA + 4 S-adenosyl-L-homocysteine + 4 H(+). In terms of biological role, specifically dimethylates two adjacent adenosines (A1518 and A1519) in the loop of a conserved hairpin near the 3'-end of 16S rRNA in the 30S particle. May play a critical role in biogenesis of 30S subunits. The protein is Ribosomal RNA small subunit methyltransferase A of Prochlorococcus marinus (strain MIT 9313).